The following is a 231-amino-acid chain: Probable caffeoyl-CoA O-methyltransferase 2 (231 aa).

Residues Thr-53, Asp-75, 77 to 78 (GV), Ser-83, Asp-101, Ala-130, Asp-152, Asp-154, and Tyr-161 each bind S-adenosyl-L-methionine. Asp-152 is a binding site for a divalent metal cation. Residues Asp-178 and Asn-179 each coordinate a divalent metal cation.

It belongs to the class I-like SAM-binding methyltransferase superfamily. Cation-dependent O-methyltransferase family. CCoAMT subfamily.

It catalyses the reaction (E)-caffeoyl-CoA + S-adenosyl-L-methionine = (E)-feruloyl-CoA + S-adenosyl-L-homocysteine + H(+). The protein is Probable caffeoyl-CoA O-methyltransferase 2 (omt6) of Dictyostelium discoideum (Social amoeba).